We begin with the raw amino-acid sequence, 365 residues long: Chorismate synthase (365 aa).

Residues arginine 48 and arginine 54 each contribute to the NADP(+) site. FMN-binding positions include 131–133 (RSS), 243–244 (NA), glycine 288, 303–307 (KPTSS), and arginine 329.

Belongs to the chorismate synthase family. In terms of assembly, homotetramer. Requires FMNH2 as cofactor.

It catalyses the reaction 5-O-(1-carboxyvinyl)-3-phosphoshikimate = chorismate + phosphate. The protein operates within metabolic intermediate biosynthesis; chorismate biosynthesis; chorismate from D-erythrose 4-phosphate and phosphoenolpyruvate: step 7/7. Functionally, catalyzes the anti-1,4-elimination of the C-3 phosphate and the C-6 proR hydrogen from 5-enolpyruvylshikimate-3-phosphate (EPSP) to yield chorismate, which is the branch point compound that serves as the starting substrate for the three terminal pathways of aromatic amino acid biosynthesis. This reaction introduces a second double bond into the aromatic ring system. The chain is Chorismate synthase from Rhizobium etli (strain ATCC 51251 / DSM 11541 / JCM 21823 / NBRC 15573 / CFN 42).